The primary structure comprises 261 residues: 4-phosphopantoate--beta-alanine ligase (261 aa).

Residues Arg-17, Arg-39, 181–183, 187–188, and 199–200 contribute to the ATP site; these read DLN, RS, and NI.

Belongs to the archaeal phosphopantothenate synthetase family. Homodimer.

The catalysed reaction is (R)-4-phosphopantoate + beta-alanine + ATP = (R)-4'-phosphopantothenate + AMP + diphosphate + H(+). It participates in cofactor biosynthesis; coenzyme A biosynthesis. Activity is not affected by 4'-phosphopantothenate or CoA/acetyl-CoA. Catalyzes the condensation of (R)-4-phosphopantoate and beta-alanine to 4'-phosphopantothenate in the CoA biosynthesis pathway. Cannot use (R)-pantoate as substrate and thus does not display pantothenate synthetase (PS) activity. Displays strict specificity for its natural substrates, 4-phosphopantoate, ATP and beta-alanine. In Thermococcus kodakarensis (strain ATCC BAA-918 / JCM 12380 / KOD1) (Pyrococcus kodakaraensis (strain KOD1)), this protein is 4-phosphopantoate--beta-alanine ligase.